The following is a 316-amino-acid chain: 4-hydroxy-3-methylbut-2-enyl diphosphate reductase (316 aa).

C12 is a binding site for [4Fe-4S] cluster. The (2E)-4-hydroxy-3-methylbut-2-enyl diphosphate site is built by H41 and H74. H41 and H74 together coordinate dimethylallyl diphosphate. Isopentenyl diphosphate-binding residues include H41 and H74. C96 is a binding site for [4Fe-4S] cluster. (2E)-4-hydroxy-3-methylbut-2-enyl diphosphate is bound at residue H124. A dimethylallyl diphosphate-binding site is contributed by H124. H124 serves as a coordination point for isopentenyl diphosphate. E126 acts as the Proton donor in catalysis. A (2E)-4-hydroxy-3-methylbut-2-enyl diphosphate-binding site is contributed by T167. C197 is a binding site for [4Fe-4S] cluster. (2E)-4-hydroxy-3-methylbut-2-enyl diphosphate-binding residues include S225, S226, N227, and S269. The dimethylallyl diphosphate site is built by S225, S226, N227, and S269. Residues S225, S226, N227, and S269 each contribute to the isopentenyl diphosphate site.

Belongs to the IspH family. As to quaternary structure, homodimer. The cofactor is [4Fe-4S] cluster.

The catalysed reaction is isopentenyl diphosphate + 2 oxidized [2Fe-2S]-[ferredoxin] + H2O = (2E)-4-hydroxy-3-methylbut-2-enyl diphosphate + 2 reduced [2Fe-2S]-[ferredoxin] + 2 H(+). It catalyses the reaction dimethylallyl diphosphate + 2 oxidized [2Fe-2S]-[ferredoxin] + H2O = (2E)-4-hydroxy-3-methylbut-2-enyl diphosphate + 2 reduced [2Fe-2S]-[ferredoxin] + 2 H(+). It functions in the pathway isoprenoid biosynthesis; dimethylallyl diphosphate biosynthesis; dimethylallyl diphosphate from (2E)-4-hydroxy-3-methylbutenyl diphosphate: step 1/1. The protein operates within isoprenoid biosynthesis; isopentenyl diphosphate biosynthesis via DXP pathway; isopentenyl diphosphate from 1-deoxy-D-xylulose 5-phosphate: step 6/6. In terms of biological role, catalyzes the conversion of 1-hydroxy-2-methyl-2-(E)-butenyl 4-diphosphate (HMBPP) into a mixture of isopentenyl diphosphate (IPP) and dimethylallyl diphosphate (DMAPP). Acts in the terminal step of the DOXP/MEP pathway for isoprenoid precursor biosynthesis. This Escherichia coli (strain UTI89 / UPEC) protein is 4-hydroxy-3-methylbut-2-enyl diphosphate reductase.